The primary structure comprises 495 residues: UDP-glycosyltransferase 73C25 (495 aa).

Position 23-26 (23-26) interacts with UDP-alpha-D-glucose; that stretch reads GHMI. His24 functions as the Proton acceptor in the catalytic mechanism. Residue Asp129 is the Charge relay of the active site. UDP-alpha-D-glucose contacts are provided by residues 355-358, 373-381, and 397-398; these read WSPQ, HCGWNSTLE, and DQ.

The protein belongs to the UDP-glycosyltransferase family.

Catalyzes the transfer of a glucose (Glc) moiety from UDP-Glc to the C-28 carboxylic group of oleanolate 3-O-beta-D-glucoside to form oleanolate 3,28-O-beta-D-diglucoside. In Barbarea vulgaris (Yellow rocket), this protein is UDP-glycosyltransferase 73C25.